The chain runs to 633 residues: Biosynthetic arginine decarboxylase (633 aa).

Residue Lys101 is modified to N6-(pyridoxal phosphate)lysine. 284–294 provides a ligand contact to substrate; the sequence is VDVGGGLGVDY.

It belongs to the Orn/Lys/Arg decarboxylase class-II family. SpeA subfamily. Requires Mg(2+) as cofactor. Pyridoxal 5'-phosphate is required as a cofactor.

It carries out the reaction L-arginine + H(+) = agmatine + CO2. Its pathway is amine and polyamine biosynthesis; agmatine biosynthesis; agmatine from L-arginine: step 1/1. In terms of biological role, catalyzes the biosynthesis of agmatine from arginine. In Aeromonas hydrophila subsp. hydrophila (strain ATCC 7966 / DSM 30187 / BCRC 13018 / CCUG 14551 / JCM 1027 / KCTC 2358 / NCIMB 9240 / NCTC 8049), this protein is Biosynthetic arginine decarboxylase.